Here is a 255-residue protein sequence, read N- to C-terminus: Ras-like protein family member 12 (255 aa).

GTP-binding positions include 30–37, 77–81, and 137–140; these read GAMGSGKS, DTADQ, and NKVD.

This sequence belongs to the small GTPase superfamily. Ras family.

The enzyme catalyses GTP + H2O = GDP + phosphate + H(+). This is Ras-like protein family member 12 (RASL12) from Danio rerio (Zebrafish).